A 243-amino-acid polypeptide reads, in one-letter code: UPF0280 protein Memar_1519 (243 aa).

The protein belongs to the UPF0280 family.

This is UPF0280 protein Memar_1519 from Methanoculleus marisnigri (strain ATCC 35101 / DSM 1498 / JR1).